The following is a 141-amino-acid chain: Putative nickel-responsive regulator (141 aa).

4 residues coordinate Ni(2+): histidine 80, histidine 91, histidine 93, and cysteine 99.

This sequence belongs to the transcriptional regulatory CopG/NikR family. In terms of assembly, homotetramer. The cofactor is Ni(2+).

Transcriptional regulator. The protein is Putative nickel-responsive regulator of Methanocaldococcus jannaschii (strain ATCC 43067 / DSM 2661 / JAL-1 / JCM 10045 / NBRC 100440) (Methanococcus jannaschii).